A 130-amino-acid polypeptide reads, in one-letter code: Profilin-12 (130 aa).

Cys13 and Cys115 are oxidised to a cystine. The short motif at 81–97 is the Involved in PIP2 interaction element; that stretch reads AVIRGKKGSGGITVKKT. Thr111 bears the Phosphothreonine mark.

The protein belongs to the profilin family. Occurs in many kinds of cells as a complex with monomeric actin in a 1:1 ratio. In terms of processing, phosphorylated by MAP kinases.

The protein resides in the cytoplasm. It is found in the cytoskeleton. Functionally, binds to actin and affects the structure of the cytoskeleton. At high concentrations, profilin prevents the polymerization of actin, whereas it enhances it at low concentrations. In Zea mays (Maize), this protein is Profilin-12.